The chain runs to 664 residues: Trifunctional UDP-glucose 4,6-dehydratase/UDP-4-keto-6-deoxy-D-glucose 3,5-epimerase/UDP-4-keto-L-rhamnose-reductase RHM3 (664 aa).

13-19 (GAAGFIA) is a binding site for NAD(+). Thr-132 lines the substrate pocket. The active-site Proton donor is Asp-133. Active-site proton acceptor residues include Glu-134 and Tyr-159. 386–392 (GKTGWLG) is a binding site for NADP(+).

In the N-terminal section; belongs to the NAD(P)-dependent epimerase/dehydratase family. dTDP-glucose dehydratase subfamily. This sequence in the C-terminal section; belongs to the dTDP-4-dehydrorhamnose reductase family. It depends on NAD(+) as a cofactor. NADP(+) is required as a cofactor. As to expression, expressed in roots, stems, seedlings, and siliques. Lower expression in inflorescence tips, and leaves.

The catalysed reaction is UDP-alpha-D-glucose = UDP-4-dehydro-6-deoxy-alpha-D-glucose + H2O. It participates in carbohydrate biosynthesis. Trifunctional enzyme involved in UDP-beta-L-rhamnose biosynthesis, a precursor of the primary cell wall components rhamnogalacturonan I (RG-I) and rhamnogalacturonan II (RG-II). Catalyzes the dehydration of UDP-glucose to form UDP-4-dehydro-6-deoxy-D-glucose followed by the epimerization of the C3' and C5' positions of UDP-4-dehydro-6-deoxy-D-glucose to form UDP-4-keto-beta-L-rhamnose and the reduction of UDP-4-keto-beta-L-rhamnose to yield UDP-beta-L-rhamnose. The sequence is that of Trifunctional UDP-glucose 4,6-dehydratase/UDP-4-keto-6-deoxy-D-glucose 3,5-epimerase/UDP-4-keto-L-rhamnose-reductase RHM3 from Arabidopsis thaliana (Mouse-ear cress).